The primary structure comprises 485 residues: Adenosylhomocysteinase (485 aa).

The substrate site is built by Thr64, Asp139, and Glu205. An NAD(+)-binding site is contributed by 206–208; it reads TTT. Substrate contacts are provided by Lys235 and Asp239. NAD(+)-binding positions include Asn240, 269-274, Glu292, Asn327, 348-350, and Asn397; these read GYGDVG and IGH.

The protein belongs to the adenosylhomocysteinase family. Homotetramer. Requires NAD(+) as cofactor.

It carries out the reaction S-adenosyl-L-homocysteine + H2O = L-homocysteine + adenosine. It functions in the pathway amino-acid biosynthesis; L-homocysteine biosynthesis; L-homocysteine from S-adenosyl-L-homocysteine: step 1/1. Adenosylhomocysteine is a competitive inhibitor of S-adenosyl-L-methionine-dependent methyl transferase reactions; therefore adenosylhomocysteinase may play a key role in the control of methylations via regulation of the intracellular concentration of adenosylhomocysteine. The polypeptide is Adenosylhomocysteinase (SAHH) (Triticum aestivum (Wheat)).